The sequence spans 508 residues: MAELQMLLEEEIPSGKRALIESYQNLTRVADYCENNYIQATDKRKALEETKAYTTQSLASVAYQINALANNVLQLLDIQASQLRRMESSINHISQTVDIHKEKVARREIGILTTNKNTSRTHKIIAPANMERPVRYIRKPIDYTVLDDVGHGVKWLKAKHGNNQPARTGTLSRTNPPTQKPPSPPMSGRGTLGRNTPYKTLEPVKPPTVPNDYMTSPARLGSQHSPGRTASLNQRPRTHSGSSGGSGSRENSGSSSIGIPIAVPTPSPPTIGPENISVPPPSGAPPAPPLAPLLPVSTVIAAPGSAPGSQYGTMTRQISRHNSTTSSTSSGGYRRTPSVTAQFSAQPHVNGGPLYSQNSISIAPPPPPMPQLTPQIPLTGFVARVQENIADSPTPPPPPPPDDIPMFDDSPPPPPPPPVDYEDEEAAVVQYNDPYADGDPAWAPKNYIEKVVAIYDYTKDKDDELSFMEGAIIYVIKKNDDGWYEGVCNRVTGLFPGNYVESIMHYTD.

Ala2 is subject to N-acetylalanine. The segment at 18–79 is required for binding to WASF1; that stretch reads ALIESYQNLT…NNVLQLLDIQ (62 aa). A t-SNARE coiled-coil homology domain is found at 45 to 107; the sequence is KALEETKAYT…DIHKEKVARR (63 aa). Phosphotyrosine is present on Tyr53. Disordered stretches follow at residues 159 to 290, 306 to 375, and 388 to 421; these read KHGN…APPL, APGS…LTPQ, and NIAD…PVDY. Polar residues predominate over residues 161 to 175; that stretch reads GNNQPARTGTLSRTN. Phosphothreonine occurs at positions 174 and 178. Phosphoserine occurs at positions 183 and 187. Position 213 is a phosphotyrosine; by ABL1 (Tyr213). Thr215 carries the phosphothreonine modification. Ser216, Ser222, and Ser225 each carry phosphoserine. Positions 222 to 235 are enriched in polar residues; it reads SQHSPGRTASLNQR. Over residues 248 to 258 the composition is skewed to low complexity; the sequence is SRENSGSSSIG. Over residues 278–290 the composition is skewed to pro residues; the sequence is VPPPSGAPPAPPL. Residues 307–322 are compositionally biased toward polar residues; that stretch reads PGSQYGTMTRQISRHN. A phosphoserine mark is found at Ser319 and Ser323. Residues 337–347 show a composition bias toward polar residues; the sequence is PSVTAQFSAQP. Pro residues-rich tracts occupy residues 393-403 and 410-419; these read PTPPPPPPPDD and SPPPPPPPPV. An SH3 domain is found at 446–505; it reads NYIEKVVAIYDYTKDKDDELSFMEGAIIYVIKKNDDGWYEGVCNRVTGLFPGNYVESIMH. Phosphotyrosine is present on Tyr455. Phosphoserine is present on Ser466. Position 507 is a phosphothreonine (Thr507).

This sequence belongs to the ABI family. As to quaternary structure, interacts with ABL1, ENAH, STX1A, SNAP25, VAMP2, EPS8, and through its N-terminus with WASF1. Part of a complex consisting of ABI1, STX1A and SNAP25. Part of a complex consisting of ABI1, EPS8 and SOS1. Interacts with SOS1, SOS2, GRB2, SPTA1 and the first SH3 domain of NCK1. Isoform 6 does not interact with NCK1. Component of the WAVE2 complex composed of ABI1, CYFIP1/SRA1, NCKAP1/NAP1 (NCKAP1l/HEM1 in hematopoietic cells) and WASF2/WAVE2. Interacts (via SH3 domain) with SHANK2 and SHANK3, but not SHANK1; the interaction is direct. Interacts with the heterodimer MYC:MAX; the interaction may enhance MYC:MAX transcriptional activity. Interacts with FNBP1L (via the SH3 domain), WASF2, and CDC42, but only in the presence of FNBP1L. (Microbial infection) Interacts with human cytomegalovirus/HHV-5 protein UL135. Phosphorylated on tyrosine residues after serum stimulation or induction by v-Abl. Seems to be phosphorylated at Tyr-53 by ABL1, required for nuclear but not for synaptic localization. In terms of tissue distribution, widely expressed, with highest expression in brain.

Its subcellular location is the cytoplasm. It localises to the nucleus. It is found in the cell projection. The protein localises to the lamellipodium. The protein resides in the filopodium. Its subcellular location is the growth cone. It localises to the postsynaptic density. It is found in the cytoskeleton. May act in negative regulation of cell growth and transformation by interacting with nonreceptor tyrosine kinases ABL1 and/or ABL2. May play a role in regulation of EGF-induced Erk pathway activation. Involved in cytoskeletal reorganization and EGFR signaling. Together with EPS8 participates in transduction of signals from Ras to Rac. In vitro, a trimeric complex of ABI1, EPS8 and SOS1 exhibits Rac specific guanine nucleotide exchange factor (GEF) activity and ABI1 seems to act as an adapter in the complex. Regulates ABL1/c-Abl-mediated phosphorylation of ENAH. Recruits WASF1 to lamellipodia and there seems to regulate WASF1 protein level. In brain, seems to regulate the dendritic outgrowth and branching as well as to determine the shape and number of synaptic contacts of developing neurons. In Homo sapiens (Human), this protein is Abl interactor 1.